Here is a 70-residue protein sequence, read N- to C-terminus: Small ribosomal subunit protein bS21 (70 aa).

The protein belongs to the bacterial ribosomal protein bS21 family.

In Polynucleobacter asymbioticus (strain DSM 18221 / CIP 109841 / QLW-P1DMWA-1) (Polynucleobacter necessarius subsp. asymbioticus), this protein is Small ribosomal subunit protein bS21.